Here is a 438-residue protein sequence, read N- to C-terminus: GTPase Obg (438 aa).

An Obg domain is found at 2–160; it reads SMFLDTAKIS…RELELELKIL (159 aa). The interval 128-147 is disordered; that stretch reads NIRFATPRNPAPEIAENGEP. The 178-residue stretch at 161 to 338 folds into the OBG-type G domain; that stretch reads ADVGLVGFPS…LLDATANLLA (178 aa). GTP-binding positions include 167–174, 192–196, 214–217, 284–287, and 319–321; these read GFPSVGKS, FTTIV, DLPG, NKMD, and STL. Mg(2+) contacts are provided by serine 174 and threonine 194. One can recognise an OCT domain in the interval 360–438; it reads GFSEEEKAFE…IGNFEFEFVD (79 aa).

Belongs to the TRAFAC class OBG-HflX-like GTPase superfamily. OBG GTPase family. Monomer. Mg(2+) is required as a cofactor.

The protein localises to the cytoplasm. Functionally, an essential GTPase which binds GTP, GDP and possibly (p)ppGpp with moderate affinity, with high nucleotide exchange rates and a fairly low GTP hydrolysis rate. Plays a role in control of the cell cycle, stress response, ribosome biogenesis and in those bacteria that undergo differentiation, in morphogenesis control. The polypeptide is GTPase Obg (Streptococcus uberis (strain ATCC BAA-854 / 0140J)).